A 185-amino-acid chain; its full sequence is Threonylcarbamoyl-AMP synthase (185 aa).

The 181-residue stretch at 5-185 (ADRIADAVAA…DLQSGETLRR (181 aa)) folds into the YrdC-like domain.

The protein belongs to the SUA5 family. TsaC subfamily.

The protein localises to the cytoplasm. It catalyses the reaction L-threonine + hydrogencarbonate + ATP = L-threonylcarbamoyladenylate + diphosphate + H2O. Its function is as follows. Required for the formation of a threonylcarbamoyl group on adenosine at position 37 (t(6)A37) in tRNAs that read codons beginning with adenine. Catalyzes the conversion of L-threonine, HCO(3)(-)/CO(2) and ATP to give threonylcarbamoyl-AMP (TC-AMP) as the acyladenylate intermediate, with the release of diphosphate. The protein is Threonylcarbamoyl-AMP synthase of Chromohalobacter salexigens (strain ATCC BAA-138 / DSM 3043 / CIP 106854 / NCIMB 13768 / 1H11).